A 392-amino-acid chain; its full sequence is Succinate--CoA ligase [ADP-forming] subunit beta (392 aa).

Residues 9 to 247 (KAILRKYGVA…VTEEDPLEVE (239 aa)) form the ATP-grasp domain. ATP-binding positions include lysine 49, 56-58 (GRG), glutamate 102, leucine 105, and glutamate 110. Asparagine 202 and aspartate 216 together coordinate Mg(2+). Substrate is bound by residues asparagine 267 and 324–326 (GIL).

Belongs to the succinate/malate CoA ligase beta subunit family. In terms of assembly, heterotetramer of two alpha and two beta subunits. Mg(2+) is required as a cofactor.

It carries out the reaction succinate + ATP + CoA = succinyl-CoA + ADP + phosphate. The catalysed reaction is GTP + succinate + CoA = succinyl-CoA + GDP + phosphate. It functions in the pathway carbohydrate metabolism; tricarboxylic acid cycle; succinate from succinyl-CoA (ligase route): step 1/1. Succinyl-CoA synthetase functions in the citric acid cycle (TCA), coupling the hydrolysis of succinyl-CoA to the synthesis of either ATP or GTP and thus represents the only step of substrate-level phosphorylation in the TCA. The beta subunit provides nucleotide specificity of the enzyme and binds the substrate succinate, while the binding sites for coenzyme A and phosphate are found in the alpha subunit. The protein is Succinate--CoA ligase [ADP-forming] subunit beta of Koribacter versatilis (strain Ellin345).